Consider the following 132-residue polypeptide: Small ribosomal subunit protein uS8 (132 aa).

The protein belongs to the universal ribosomal protein uS8 family. In terms of assembly, part of the 30S ribosomal subunit. Contacts proteins S5 and S12.

Its function is as follows. One of the primary rRNA binding proteins, it binds directly to 16S rRNA central domain where it helps coordinate assembly of the platform of the 30S subunit. In Bifidobacterium adolescentis (strain ATCC 15703 / DSM 20083 / NCTC 11814 / E194a), this protein is Small ribosomal subunit protein uS8.